The primary structure comprises 387 residues: NADPH-dependent aldehyde reductase YqhD (387 aa).

NADP(+)-binding residues include G38, S40, N68, G95, S96, D99, T138, N147, G149, K160, Y179, and T182. Residues D194, H198, H267, and H281 each coordinate Zn(2+).

This sequence belongs to the iron-containing alcohol dehydrogenase family. As to quaternary structure, homodimer. The crystals contain two dimers in the asymmetric unit. It depends on Zn(2+) as a cofactor.

It catalyses the reaction a primary alcohol + NADP(+) = an aldehyde + NADPH + H(+). The catalysed reaction is butan-1-ol + NADP(+) = butanal + NADPH + H(+). It carries out the reaction 1-propanol + NADP(+) = propanal + NADPH + H(+). The enzyme catalyses allyl alcohol + NADP(+) = acrolein + NADPH + H(+). Functionally, exhibits NADPH-dependent reductase activity for a broad range of short-chain aldehydes. Shows highest catalytic efficiency toward butanal, propanal and the highly toxic aldehydes acrolein and malondialdehyde (MDA), which are produced mainly during lipid peroxidation. Mediates resistance to reactive oxygen species (ROS) elicitors, such as paraquat and potassium tellurite, probably by protecting the cell against the toxic effects of reactive aldehydes derived from membrane lipid peroxidation. Also acts, with lower efficiency, on acetaldehyde, glyceraldehyde, glycolaldehyde, methylglyoxal, glyoxal and hydroxyacetone. Could be involved in glyoxal metabolism, by catalyzing the reduction of glyoxal to glycolaldehyde, and further to 1,2-ethandiol. Catalyzes the reduction of isobutyraldehyde (2-methylpropanal) to isobutanol, and probably contributes to the production of isobutanol. Can probably catalyze the reduction of glutaraldehyde, a widely used biocide, to 1,5-pentanediol, which is non-toxic. Overexpression of YqhD protects the cells against glutaraldehyde toxicity. Can catalyze in vitro the NADPH-dependent reduction of furfural, a natural product of lignocellulosic decomposition, to the less toxic product, furfuryl alcohol. However, it is unlikely that furfural is a physiological substrate. In terms of biological role, in contrast, Sulzenbacher et al. detected significant activities only in the presence of alcohol and NADP(+). They reported in vitro NADP(+)-dependent alcohol dehydrogenase (ADH) activity towards various alcohols, with a preference for alcohols longer than C(3), but the affinity for the substrates is poor, suggesting that these compounds are not the physiological substrates. Perez et al. did not detect dehydrogenase activity with short and medium chain alcohols such as methanol, ethanol, propanol, butanol or isopropanol. The chain is NADPH-dependent aldehyde reductase YqhD (yqhD) from Escherichia coli (strain K12).